The following is a 359-amino-acid chain: Serum paraoxonase/arylesterase 1 (359 aa).

C42 and C353 are joined by a disulfide. N-linked (GlcNAc...) asparagine glycosylation is present at N50. Positions 53 and 54 each coordinate Ca(2+). Catalysis depends on H115, which acts as the Proton acceptor. Positions 117, 168, 169, and 224 each coordinate Ca(2+). N253 carries an N-linked (GlcNAc...) asparagine glycan. Ca(2+) is bound by residues D269 and N270. N-linked (GlcNAc...) asparagine glycosylation is found at N270 and N324.

The protein belongs to the paraoxonase family. Homodimer. Interacts with CLU. Requires Ca(2+) as cofactor. In terms of processing, glycosylated. The signal sequence is not cleaved. Plasma. Associated with HDL.

The protein resides in the secreted. It is found in the extracellular space. It carries out the reaction a phenyl acetate + H2O = a phenol + acetate + H(+). The catalysed reaction is An aryl dialkyl phosphate + H2O = dialkyl phosphate + an aryl alcohol.. The enzyme catalyses an N-acyl-L-homoserine lactone + H2O = an N-acyl-L-homoserine + H(+). Hydrolyzes the toxic metabolites of a variety of organophosphorus insecticides. Capable of hydrolyzing a broad spectrum of organophosphate substrates and lactones, and a number of aromatic carboxylic acid esters. Mediates an enzymatic protection of low density lipoproteins against oxidative modification. This is Serum paraoxonase/arylesterase 1 (PON1) from Oryctolagus cuniculus (Rabbit).